A 331-amino-acid polypeptide reads, in one-letter code: Lipoyl synthase (331 aa).

A disordered region spans residues 1-20 (MTTETNPAVTPAYNPSEKQK). Positions 71, 76, 82, 97, 101, 104, and 311 each coordinate [4Fe-4S] cluster. Residues 82-300 (CFGKGTATFM…EEEAYKMGFA (219 aa)) enclose the Radical SAM core domain.

This sequence belongs to the radical SAM superfamily. Lipoyl synthase family. Requires [4Fe-4S] cluster as cofactor.

Its subcellular location is the cytoplasm. The enzyme catalyses [[Fe-S] cluster scaffold protein carrying a second [4Fe-4S](2+) cluster] + N(6)-octanoyl-L-lysyl-[protein] + 2 oxidized [2Fe-2S]-[ferredoxin] + 2 S-adenosyl-L-methionine + 4 H(+) = [[Fe-S] cluster scaffold protein] + N(6)-[(R)-dihydrolipoyl]-L-lysyl-[protein] + 4 Fe(3+) + 2 hydrogen sulfide + 2 5'-deoxyadenosine + 2 L-methionine + 2 reduced [2Fe-2S]-[ferredoxin]. It participates in protein modification; protein lipoylation via endogenous pathway; protein N(6)-(lipoyl)lysine from octanoyl-[acyl-carrier-protein]: step 2/2. Functionally, catalyzes the radical-mediated insertion of two sulfur atoms into the C-6 and C-8 positions of the octanoyl moiety bound to the lipoyl domains of lipoate-dependent enzymes, thereby converting the octanoylated domains into lipoylated derivatives. This Janthinobacterium sp. (strain Marseille) (Minibacterium massiliensis) protein is Lipoyl synthase.